A 349-amino-acid polypeptide reads, in one-letter code: CCN family member 2 (349 aa).

A signal peptide spans 1–26; sequence MTAASMGPVRVAFVVLLALCSRPAVG. In terms of domain architecture, IGFBP N-terminal spans 27–98; sequence QNCSGPCRCP…NRKIGVCTAK (72 aa). N-linked (GlcNAc...) asparagine glycosylation is present at Asn-28. 6 disulfide bridges follow: Cys-29/Cys-54, Cys-33/Cys-56, Cys-35/Cys-57, Cys-43/Cys-60, Cys-68/Cys-82, and Cys-74/Cys-95. The 67-residue stretch at 101–167 folds into the VWFC domain; the sequence is APCIFGGTVY…GKCCEEWVCD (67 aa). One can recognise a TSP type-1 domain in the interval 198 to 243; it reads NCLVQTTEWSACSKTCGMGISTRVTNDNASCRLEKQSRLCMVRPCE. Asn-225 carries an N-linked (GlcNAc...) asparagine glycan. Positions 247 to 349 are heparin-binding; sequence EENIKKGKKC…YYRKMYGDMA (103 aa). 5 disulfides stabilise this stretch: Cys-256/Cys-293, Cys-273/Cys-307, Cys-284/Cys-323, Cys-287/Cys-325, and Cys-292/Cys-329. One can recognise a CTCK domain in the interval 256–330; it reads CIRTPKISKP…KTCACHYNCP (75 aa).

Belongs to the CCN family. As to quaternary structure, monomer. Interacts with TSKU. As to expression, expressed in bone marrow and thymic cells. Also expressed one of two Wilms tumors tested.

The protein resides in the secreted. Its subcellular location is the extracellular space. It is found in the extracellular matrix. Its function is as follows. Major connective tissue mitoattractant secreted by vascular endothelial cells. Promotes proliferation and differentiation of chondrocytes. Is involved in the stimulation of osteoblast differentiation and has a critical role in osteogenesis. Mediates heparin- and divalent cation-dependent cell adhesion in many cell types including fibroblasts, myofibroblasts, endothelial and epithelial cells. Enhances fibroblast growth factor-induced DNA synthesis. The protein is CCN family member 2 of Homo sapiens (Human).